We begin with the raw amino-acid sequence, 350 residues long: Geranylgeranyl diphosphate synthase (350 aa).

Residues Lys70, Arg73, and His102 each coordinate isopentenyl diphosphate. Positions 109 and 113 each coordinate Mg(2+). The DDXXD motif signature appears at 109-113 (DDVMD). Arg119 provides a ligand contact to isopentenyl diphosphate. The short motif at 240–244 (DDLIG) is the DDXXD motif element.

The protein belongs to the FPP/GGPP synthase family. Requires Mg(2+) as cofactor.

The enzyme catalyses isopentenyl diphosphate + (2E,6E)-farnesyl diphosphate = (2E,6E,10E)-geranylgeranyl diphosphate + diphosphate. It participates in isoprenoid biosynthesis; geranylgeranyl diphosphate biosynthesis; geranylgeranyl diphosphate from farnesyl diphosphate and isopentenyl diphosphate: step 1/1. Functionally, catalyzes the condensation of isopentenyl pyrophosphate (IPP) with (2E,6E)-farnesyl diphosphate (E,E-FPP) to yield geranylgeranyl diphosphate (GGPP). This is Geranylgeranyl diphosphate synthase from Mycobacterium tuberculosis (strain ATCC 25618 / H37Rv).